The following is a 501-amino-acid chain: MAAYQLDDTSLPAALPELPFAFARNFGVVLTERQGTPLLLCRPGVAPQTLLEVRRVAGCAFEVEQLGSDEFEELLMAHYQRDSSEARQLMEDLGNEMDFFALAEELPQSEDLLDADDDAPIIRLINAMLSEAIKEEASDIHIETFERVLVIRFRIDGVLREILRPHRKLASLLVSRIKVMSRMDIAEKRVPQDGRISLRIGGRAVDVRVSTMPSSYGERVVLRLLDKNNVRLELKQLGMTLANRNIISELIRKPHGIILVTGPTGSGKSTTLYAALSEINSRDRNILTVEDPIEYDLEGVGQTQVNTKVDMTFARGLRAILRQDPDVVMVGEIRDLETAQIAVQASLTGHLVMSTLHTNTAIGAITRMRDMGIEPFLLSSSLLAVLAQRLVRTLCPDCRAPRPITEQERLAMGMELAPDQQVWRPVGCEQCNHTGYRGRTGIHELVVIDEAVREAIHSASGELAIERLIRDHTPSIRRDGIDKVLKGQTSLEEVLRVTRED.

Position 262 to 269 (262 to 269) interacts with ATP; it reads GPTGSGKS. 4 residues coordinate Zn(2+): Cys395, Cys398, Cys428, and Cys431.

This sequence belongs to the GSP E family. In terms of assembly, forms homooligomers; most probably hexamers. Interacts with ExeL/GspL. Zn(2+) serves as cofactor.

The protein resides in the cell inner membrane. It catalyses the reaction ATP + H2O + cellular proteinSide 1 = ADP + phosphate + cellular proteinSide 2.. Functionally, ATPase component of the type II secretion system required for the energy-dependent secretion of extracellular factors such as proteases and toxins from the periplasm. Acts as a molecular motor to provide the energy that is required for assembly of the pseudopilus and the extrusion of substrates generated in the cytoplasm. In Aeromonas hydrophila, this protein is Type II secretion system protein E (exeE).